The primary structure comprises 65 residues: Alpha-toxin Bot1 (65 aa).

Positions 2–64 (RDAYIAQPEN…VPIRIPGKCH (63 aa)) constitute an LCN-type CS-alpha/beta domain. Cystine bridges form between cysteine 12/cysteine 63, cysteine 16/cysteine 36, cysteine 22/cysteine 46, and cysteine 26/cysteine 48. Phenylalanine 65 is modified (phenylalanine amide).

The protein belongs to the long (4 C-C) scorpion toxin superfamily. Sodium channel inhibitor family. Alpha subfamily. In terms of tissue distribution, expressed by the venom gland.

The protein localises to the secreted. In terms of biological role, alpha toxins bind voltage-independently at site-3 of sodium channels (Nav) and inhibit the inactivation of the activated channels, thereby blocking neuronal transmission. This chain is Alpha-toxin Bot1, found in Buthus occitanus tunetanus (Common European scorpion).